Here is a 164-residue protein sequence, read N- to C-terminus: Phosphopantetheine adenylyltransferase (164 aa).

Ser-10 provides a ligand contact to substrate. ATP-binding positions include Ser-10 to Phe-11 and His-18. Lys-42, Leu-74, and Arg-88 together coordinate substrate. Residues Gly-89 to Arg-91, Glu-99, and Tyr-124 to Ser-130 contribute to the ATP site.

Belongs to the bacterial CoaD family. In terms of assembly, homohexamer. Mg(2+) is required as a cofactor.

It is found in the cytoplasm. It catalyses the reaction (R)-4'-phosphopantetheine + ATP + H(+) = 3'-dephospho-CoA + diphosphate. Its pathway is cofactor biosynthesis; coenzyme A biosynthesis; CoA from (R)-pantothenate: step 4/5. Reversibly transfers an adenylyl group from ATP to 4'-phosphopantetheine, yielding dephospho-CoA (dPCoA) and pyrophosphate. The sequence is that of Phosphopantetheine adenylyltransferase from Exiguobacterium sp. (strain ATCC BAA-1283 / AT1b).